Reading from the N-terminus, the 338-residue chain is MSKLFSEYKLKDVTLKNRIVMSPMCMYSVENKDGIATDFHFAHYVSRAAGGTGLVILEATAVQEVGRISEFDLGLWNDEQVPALKRLVDGLHYHGAKAGIQLAHAGRKAVLPGEIVAPSAIPFDEKSAKPVELTKEAIKEVVADFKRAAYRAKEAGFDVIEIHAAHGYLIHQFLSPISNRREDNYGGPAGNRYKILSDIIKAVKEVWDGPIIVRVSATDYAHGGLQLEDHIPFAKWMKADGVELIDVSTGGLVNVEPPVFPGYQVPFADEIRRGAGIATGALGLITRGEQAEEILCNERADLIIIGRELLRNPYFAKEAAETLGETIEAPKQYSRAWK.

FMN is bound at residue 22-25; sequence SPMC. A substrate-binding site is contributed by Tyr-27. 2 residues coordinate FMN: Ala-59 and Gln-101. 163-166 lines the substrate pocket; the sequence is HAAH. FMN-binding positions include Arg-214 and 306 to 307; that span reads GR.

The protein belongs to the NADH:flavin oxidoreductase/NADH oxidase family. NamA subfamily. As to quaternary structure, homotetramer. Requires FMN as cofactor.

The catalysed reaction is A + NADPH + H(+) = AH2 + NADP(+). Functionally, catalyzes the reduction of the double bond of an array of alpha,beta-unsaturated aldehydes and ketones. It also reduces the nitro group of nitroester and nitroaromatic compounds. It could have a role in detoxification processes. The sequence is that of NADPH dehydrogenase from Listeria innocua serovar 6a (strain ATCC BAA-680 / CLIP 11262).